Reading from the N-terminus, the 245-residue chain is MKKIDLNADIAEGFPFDESLLQLLSSANIACGLHAGGAKEMQSAVKFAKENKVRIGAHPSFPDRENFGRTAMALSSQELIAHLRYQLGALKAICDGEGAVISYVKPHGALYNQAAKDEKIARVIAQTVYQFDPNLKLMGLAGSLMLRIAEEEKLQTISEVFADRHYMPDGSLVPRSQPNAMVESDKEAIQQVLQMVTKGQVNAIDGSLVPVKAESICLHGDNQHSLQFAKRIVEELEKNHIKITA.

It belongs to the LamB/PxpA family. As to quaternary structure, forms a complex composed of PxpA, PxpB and PxpC.

The enzyme catalyses 5-oxo-L-proline + ATP + 2 H2O = L-glutamate + ADP + phosphate + H(+). Functionally, catalyzes the cleavage of 5-oxoproline to form L-glutamate coupled to the hydrolysis of ATP to ADP and inorganic phosphate. The sequence is that of 5-oxoprolinase subunit A from Haemophilus influenzae (strain 86-028NP).